Reading from the N-terminus, the 264-residue chain is S-adenosylmethionine decarboxylase proenzyme (264 aa).

The Schiff-base intermediate with substrate; via pyruvic acid role is filled by S113. S113 is modified (pyruvic acid (Ser); by autocatalysis). H118 (proton acceptor; for processing activity) is an active-site residue. C141 (proton donor; for catalytic activity) is an active-site residue.

It belongs to the prokaryotic AdoMetDC family. Type 2 subfamily. In terms of assembly, heterooctamer of four alpha and four beta chains arranged as a tetramer of alpha/beta heterodimers. The cofactor is pyruvate. Is synthesized initially as an inactive proenzyme. Formation of the active enzyme involves a self-maturation process in which the active site pyruvoyl group is generated from an internal serine residue via an autocatalytic post-translational modification. Two non-identical subunits are generated from the proenzyme in this reaction, and the pyruvate is formed at the N-terminus of the alpha chain, which is derived from the carboxyl end of the proenzyme. The post-translation cleavage follows an unusual pathway, termed non-hydrolytic serinolysis, in which the side chain hydroxyl group of the serine supplies its oxygen atom to form the C-terminus of the beta chain, while the remainder of the serine residue undergoes an oxidative deamination to produce ammonia and the pyruvoyl group blocking the N-terminus of the alpha chain.

It catalyses the reaction S-adenosyl-L-methionine + H(+) = S-adenosyl 3-(methylsulfanyl)propylamine + CO2. It participates in amine and polyamine biosynthesis; S-adenosylmethioninamine biosynthesis; S-adenosylmethioninamine from S-adenosyl-L-methionine: step 1/1. Catalyzes the decarboxylation of S-adenosylmethionine to S-adenosylmethioninamine (dcAdoMet), the propylamine donor required for the synthesis of the polyamines spermine and spermidine from the diamine putrescine. In Xylella fastidiosa (strain 9a5c), this protein is S-adenosylmethionine decarboxylase proenzyme.